A 230-amino-acid polypeptide reads, in one-letter code: Flagellar L-ring protein (230 aa).

A signal peptide spans 1–16 (MYLVFGIIFTSVIVTS). Cys-17 carries N-palmitoyl cysteine lipidation. Cys-17 carries the S-diacylglycerol cysteine lipid modification.

This sequence belongs to the FlgH family. As to quaternary structure, the basal body constitutes a major portion of the flagellar organelle and consists of four rings (L,P,S, and M) mounted on a central rod.

The protein resides in the cell outer membrane. It is found in the bacterial flagellum basal body. In terms of biological role, assembles around the rod to form the L-ring and probably protects the motor/basal body from shearing forces during rotation. The polypeptide is Flagellar L-ring protein (Bartonella bacilliformis (strain ATCC 35685 / KC583 / Herrer 020/F12,63)).